We begin with the raw amino-acid sequence, 312 residues long: Aspartate carbamoyltransferase catalytic subunit (312 aa).

2 residues coordinate carbamoyl phosphate: arginine 55 and threonine 56. L-aspartate is bound at residue lysine 83. Residues arginine 105, histidine 133, and glutamine 136 each contribute to the carbamoyl phosphate site. Arginine 166 and arginine 220 together coordinate L-aspartate. Positions 261 and 262 each coordinate carbamoyl phosphate.

It belongs to the aspartate/ornithine carbamoyltransferase superfamily. ATCase family. Heterododecamer (2C3:3R2) of six catalytic PyrB chains organized as two trimers (C3), and six regulatory PyrI chains organized as three dimers (R2).

The catalysed reaction is carbamoyl phosphate + L-aspartate = N-carbamoyl-L-aspartate + phosphate + H(+). It functions in the pathway pyrimidine metabolism; UMP biosynthesis via de novo pathway; (S)-dihydroorotate from bicarbonate: step 2/3. Functionally, catalyzes the condensation of carbamoyl phosphate and aspartate to form carbamoyl aspartate and inorganic phosphate, the committed step in the de novo pyrimidine nucleotide biosynthesis pathway. The chain is Aspartate carbamoyltransferase catalytic subunit from Prosthecochloris aestuarii (strain DSM 271 / SK 413).